The following is a 364-amino-acid chain: 4-hydroxythreonine-4-phosphate dehydrogenase (364 aa).

Substrate-binding residues include H148 and T149. A divalent metal cation is bound by residues H177, H216, and H301. The substrate site is built by K309, N318, and R327.

It belongs to the PdxA family. As to quaternary structure, homodimer. Zn(2+) serves as cofactor. Requires Mg(2+) as cofactor. Co(2+) is required as a cofactor.

It localises to the cytoplasm. The catalysed reaction is 4-(phosphooxy)-L-threonine + NAD(+) = 3-amino-2-oxopropyl phosphate + CO2 + NADH. Its pathway is cofactor biosynthesis; pyridoxine 5'-phosphate biosynthesis; pyridoxine 5'-phosphate from D-erythrose 4-phosphate: step 4/5. In terms of biological role, catalyzes the NAD(P)-dependent oxidation of 4-(phosphooxy)-L-threonine (HTP) into 2-amino-3-oxo-4-(phosphooxy)butyric acid which spontaneously decarboxylates to form 3-amino-2-oxopropyl phosphate (AHAP). In Campylobacter jejuni (strain RM1221), this protein is 4-hydroxythreonine-4-phosphate dehydrogenase.